A 436-amino-acid polypeptide reads, in one-letter code: Prenyltransferase nscD (436 aa).

It belongs to the tryptophan dimethylallyltransferase family.

It functions in the pathway secondary metabolite biosynthesis. Its function is as follows. Prenyltransferase; part of the gene cluster that mediates the biosynthesis of neosartoricin B, a prenylated anthracenone that probably exhibits T-cell antiproliferative activity, suggestive of a physiological role as an immunosuppressive agent. The non-reducing polyketide synthase nscA probably synthesizes and cyclizes the decaketide backbone. The hydrolase nscB then mediates the product release through hydrolysis followed by spontaneous decarboxylation. The prenyltransferase nscD catalyzes the addition of the dimethylallyl group to the aromatic C5. The FAD-dependent monooxygenase nscC is then responsible for the stereospecific hydroxylation at C2. Neosartoricin B can be converted into two additional compounds neosartoricins C and D. Neosartoricin C is a spirocyclic compound that is cyclized through the attack of C3 hydroxyl on C14, followed by dehydration. On the other hand, neosartoricin D is a further cyclized compound in which attack of C2 on C14 in neosartoricin C results in the formation of the acetal-containing dioxabicyclo-octanone ring. Both of these compounds are novel and possibly represent related metabolites of the gene cluster. The protein is Prenyltransferase nscD of Trichophyton equinum (strain ATCC MYA-4606 / CBS 127.97) (Horse ringworm fungus).